The sequence spans 871 residues: DNA mismatch repair protein MutS (871 aa).

An ATP-binding site is contributed by 630 to 637 (GPNMGGKS). The disordered stretch occupies residues 830 to 849 (KEEPESKSASPVEAALAGIN).

Belongs to the DNA mismatch repair MutS family.

Functionally, this protein is involved in the repair of mismatches in DNA. It is possible that it carries out the mismatch recognition step. This protein has a weak ATPase activity. This Verminephrobacter eiseniae (strain EF01-2) protein is DNA mismatch repair protein MutS.